The following is a 69-amino-acid chain: Protein transport protein Sec61 subunit gamma-3 (69 aa).

Met1 bears the N-acetylmethionine mark. Residues 1–32 are Cytoplasmic-facing; it reads MEAIDSAIDPLRDFAKSSVRLVQRCHKPDRKE. The chain crosses the membrane as a helical span at residues 33 to 61; that stretch reads FTKVAVRTAIGFVVMGFVGFFVKLVFIPI. The Extracellular portion of the chain corresponds to 62–69; it reads NNIIVGSS.

Belongs to the SecE/SEC61-gamma family. Heterotrimeric complex composed of SEC61-alpha, SEC61-beta and SEC61-gamma.

It localises to the endoplasmic reticulum membrane. Necessary for protein translocation in the endoplasmic reticulum. This is Protein transport protein Sec61 subunit gamma-3 (SEC61G3) from Arabidopsis thaliana (Mouse-ear cress).